Consider the following 708-residue polypeptide: Prolyl 3-hydroxylase 2 (708 aa).

The N-terminal stretch at 1–24 (MRERIWAPPLLLLLPLLLPPPLWG) is a signal peptide. TPR repeat units follow at residues 44-77 (FDLLYASGAAAYYSGDYERAVRDLEAALRSHRRL), 148-181 (RVPYNYLQRAYIKLNQLEKAVEAAHTFFVANPEH), 210-243 (HMESYNAGVKHYEADDFEMAIRHFEQALREYFVE), and 306-339 (PLHYDYLQFAYYRVGEYVKALECAKAYLLCHPDD). N-linked (GlcNAc...) asparagine glycans are attached at residues Asn449 and Asn549. A Fe2OG dioxygenase domain is found at 557 to 671 (THMVCRTALS…RCAVALWFTL (115 aa)). Fe cation is bound by residues His580, Asp582, and His652. Residue Arg662 is part of the active site. A Prevents secretion from ER motif is present at residues 705–708 (KDEL).

It belongs to the leprecan family. Fe cation serves as cofactor. Requires L-ascorbate as cofactor. Expression localized to the epithelia of bile ducts and to the sacroplasm of heart muscle and skeletal muscle. In the pancreas, localized to a subpopulation of Langerhans islet cells and in the salivary gland, expressed in acinar cells (at protein level). Expressed in adult heart, placenta, lung, liver, skeletal muscle and kidney. Detected in fetal heart, spleen, lung, liver skeletal muscle and kidney.

The protein localises to the endoplasmic reticulum. It localises to the sarcoplasmic reticulum. It is found in the golgi apparatus. The catalysed reaction is L-prolyl-[collagen] + 2-oxoglutarate + O2 = trans-3-hydroxy-L-prolyl-[collagen] + succinate + CO2. Its activity is regulated as follows. Inhibited by pyridine 2,4-dicarboxylate, an analog of 2-oxoglutarate. In terms of biological role, prolyl 3-hydroxylase that catalyzes the post-translational formation of 3-hydroxyproline on collagens. Contributes to proline 3-hydroxylation of collagen COL4A1 and COL1A1 in tendons, the eye sclera and in the eye lens capsule. Has high activity with the type IV collagen COL4A1, and lower activity with COL1A1. Catalyzes hydroxylation of the first Pro in Gly-Pro-Hyp sequences where Hyp is 4-hydroxyproline. Has no activity on substrates that lack 4-hydroxyproline in the third position. The chain is Prolyl 3-hydroxylase 2 from Homo sapiens (Human).